The primary structure comprises 4118 residues: BEACH domain-containing protein lvsB (4118 aa).

The interval Met1–Gln35 is disordered. The helical transmembrane segment at Gly198–Pro218 threads the bilayer. Low complexity predominate over residues Asn236 to Asn257. 3 disordered regions span residues Asn236–Gln267, Pro332–Asn382, and Ile621–Asn644. A compositionally biased stretch (basic residues) spans Asn258–Gln267. Composition is skewed to low complexity over residues Pro332–Asn381 and Ile621–Gly636. A helical membrane pass occupies residues Tyr827 to Pro847. Residues Asn1155 to Ser1170 are compositionally biased toward low complexity. Disordered stretches follow at residues Asn1155 to Asn1213, Ala1599 to Ser1622, Asn1643 to Leu1681, Gly1928 to Ser1968, Ser2015 to Leu2044, Arg2537 to Glu2574, Phe2702 to Ser2741, Asp2754 to Asn2791, Asn2902 to Glu3007, Pro3245 to Gln3265, and Lys3348 to Lys3418. Low complexity-rich tracts occupy residues Ser1657–Ser1678 and Ser1935–Ser1968. Positions Ser2540–Asn2571 are enriched in low complexity. A coiled-coil region spans residues Ser2705–Thr2738. A compositionally biased stretch (basic and acidic residues) spans Arg2706 to Thr2734. Composition is skewed to low complexity over residues Glu2758–Asn2791 and Asn2902–Asn2947. A compositionally biased stretch (polar residues) spans Gln2948–Val2962. Low complexity-rich tracts occupy residues Ser2963–Ser2980 and Ser2988–Asn3006. The 177-residue stretch at Lys3303 to Met3479 folds into the BEACH-type PH domain. The span at Ser3357–Asn3411 shows a compositional bias: low complexity. One can recognise a BEACH domain in the interval Ala3491 to Lys3782. WD repeat units lie at residues Val3868–Met3907, Gly3924–Ser3963, Thr3984–Gln4027, Phe4029–Thr4073, and Val4075–Ser4114.

It localises to the membrane. It is found in the lysosome. Its subcellular location is the endosome. Its function is as follows. Involved in negative regulation of lysosome biogenesis, by limiting the heterotypic fusion of early endosomes and postlysosomal compartments. This is BEACH domain-containing protein lvsB (lvsB) from Dictyostelium discoideum (Social amoeba).